A 342-amino-acid polypeptide reads, in one-letter code: UHRF1-like protein (342 aa).

The disordered stretch occupies residues 41 to 149; it reads SEATTLATPS…SHPGSEEEDI (109 aa). The segment covering 42–59 has biased composition (polar residues); that stretch reads EATTLATPSNLKTAGNQR. Positions 74–90 are enriched in basic and acidic residues; sequence NRSDSPRKRPTKDREDL. Over residues 115 to 141 the composition is skewed to polar residues; it reads TREQVTFNSDRDTPNTPSRQIKSTHSH. Residues 168 to 322 enclose the YDG domain; that stretch reads GHIPGIGVGK…LMVCRYAFKR (155 aa). D218 is a DNA binding site. The segment at 236–257 is disordered; the sequence is KGTKQNPKNLRTAPQTSHQSFD. Over residues 238-257 the composition is skewed to polar residues; sequence TKQNPKNLRTAPQTSHQSFD.

Its subcellular location is the nucleus. Involved in the maintenance of DNA methylation. Binds hemimethylated DNA. The polypeptide is UHRF1-like protein (Cryptococcus neoformans var. grubii serotype A (strain H99 / ATCC 208821 / CBS 10515 / FGSC 9487) (Filobasidiella neoformans var. grubii)).